Consider the following 271-residue polypeptide: Tetraspanin-11 (271 aa).

The Cytoplasmic portion of the chain corresponds to 1 to 7 (MFRVSNF). The chain crosses the membrane as a helical span at residues 8-28 (MVGLANTLVMLVGASAIGYSI). Residues 29–44 (YMFVHQGVTDCESAIR) are Extracellular-facing. The helical transmembrane segment at 45–65 (IPLLTTGLILFLVSLLGVIGS) threads the bilayer. Residues 66 to 76 (CFKENLAMVSY) are Cytoplasmic-facing. The helical transmembrane segment at 77–97 (LIILFGGIVALMIFSIFLFFV) threads the bilayer. Topologically, residues 98–236 (TNKGAGRVVS…LANIREKWRN (139 aa)) are extracellular. Residues asparagine 185 and asparagine 195 are each glycosylated (N-linked (GlcNAc...) asparagine). Residues 237–257 (LLVFNICLLILLITVYSCGCC) form a helical membrane-spanning segment. The Cytoplasmic segment spans residues 258–271 (ARRNNRTARKSDSV).

Belongs to the tetraspanin (TM4SF) family.

Its subcellular location is the membrane. In terms of biological role, may be involved in the regulation of cell differentiation. In Arabidopsis thaliana (Mouse-ear cress), this protein is Tetraspanin-11 (TET11).